The primary structure comprises 397 residues: Proteinase-activated receptor 2 (397 aa).

Positions 1-25 (MRSPSAAWLLGAAILLAASLSCSGT) are cleaved as a signal peptide. Positions 26 to 36 (IQGTNRSSKGR) are cleaved as a propeptide — removed for receptor activation. N-linked (GlcNAc...) asparagine glycosylation occurs at Asn30. Residues 37–71 (SLIGKVDGTSHVTGKGVTVETVFSVDEFSASVLTG) are Extracellular-facing. A helical transmembrane segment spans residues 72–101 (KLTTVFLPIVYTIVFVVGLPSNGMALWVFL). Over 102-108 (FRTKKKH) the chain is Cytoplasmic. A helical membrane pass occupies residues 109–137 (PAVIYMANLALADLLSVIWFPLKIAYHIH). The Extracellular segment spans residues 138-149 (GNNWIYGEALCN). An intrachain disulfide couples Cys148 to Cys226. A helical transmembrane segment spans residues 150–177 (VLIGFFYGNMYCSILFMTCLSVQRYWVI). Residues 178 to 183 (VNPMGH) lie on the Cytoplasmic side of the membrane. Residues 184–211 (SRKKANIAIGISLAIWLLILLVTIPLYV) form a helical membrane-spanning segment. The Extracellular portion of the chain corresponds to 212 to 235 (VKQTIFIPALNITTCHDVLPEQLL). Asn222 is a glycosylation site (N-linked (GlcNAc...) asparagine). The chain crosses the membrane as a helical span at residues 236–269 (VGDMFNYFLSLAIGVFLFPAFLTASAYVLMIRML). Over 270-277 (RSSAMDEN) the chain is Cytoplasmic. Residues 278 to 317 (SEKKRKRAIKLIVTVLAMYLICFTPSNLLLVVHYFLIKSQ) form a helical membrane-spanning segment. Topologically, residues 318-323 (GQSHVY) are extracellular. The chain crosses the membrane as a helical span at residues 324 to 347 (ALYIVALCLSTLNSCIDPFVYYFV). Topologically, residues 348–397 (SHDFRDHAKNALLCRSVRTVKQMQVSLTSKKHSRKSSSYSSSSTTVKTSY) are cytoplasmic. Residue Cys361 is the site of S-palmitoyl cysteine attachment. The tract at residues 373 to 397 (SLTSKKHSRKSSSYSSSSTTVKTSY) is disordered. The segment covering 383 to 397 (SSSYSSSSTTVKTSY) has biased composition (low complexity).

The protein belongs to the G-protein coupled receptor 1 family. In terms of assembly, interacts with TLR4, COPS5 and TMED2. Interacts with GNAQ, GNA11, GNA12, GNA13 and GNA14. In terms of processing, a proteolytic cleavage generates a new N-terminus that functions as a tethered ligand. Activating serine proteases include trypsin, mast cell tryptase, coagulation factors VII and Xa, myeloblastin/PRTN3 and membrane-type serine protease 1/ST14. Subsequent cleavage by serine proteases, including neutrophil elastase and cathepsin G, leads to receptor deactivation. At least in part, implicated proteases are also shown to activate the receptor; the glycosylation status of the receptor is thought to contribute to the difference. In addition to conventional trypsin-like proteases activated by other proteases and glycosidases derived from bacteria, fungi and insects. Activated by serine protease allergens such as dust mite Der p3 and Der p9 and mold Pen c13. Activated by P.gingivalis arginine-specific (trypsin-like) cysteine proteinases called gingipains. Activated by S.griseus exogenous chitinase. Activated by A.alternata aspartate protease; the cleavage generates non-conventional processed forms. Proteolytically cleaved by coagulation factor Xa (F10); cleavage results in activation of F2RL1-dependent signaling. N-glycosylated and sialylated. Post-translationally, multiple phosphorylated on serine and threonine residues in the cytoplasmic region upon receptor activation; required for receptor desensitization and recruitment of beta-arrestin. In terms of processing, monoubiquitinated by CBL at the plasma membrane and in early endosomes; not required for receptor endocytosis but for translocation to late endosomes or lysosomes. Deubiquitination involves STAMBP and USP8; required for lysosomal trafficking and receptor degradation. In terms of tissue distribution, widely expressed in tissues with especially high levels in pancreas, liver, kidney, small intestine, and colon. Moderate expression is detected in many organs, but none in brain or skeletal muscle. Expressed in endothelial cells.

The protein localises to the cell membrane. Its activity is regulated as follows. Activated upon interaction by mucunain, a cowhage (Mucuna pruriens) plant cysteine proteinase. Receptor for trypsin and trypsin-like enzymes coupled to G proteins. Its function is mediated through the activation of several signaling pathways including phospholipase C (PLC), intracellular calcium, mitogen-activated protein kinase (MAPK), I-kappaB kinase/NF-kappaB and Rho. Can also be transactivated by cleaved F2R/PAR1. Involved in modulation of inflammatory responses and regulation of innate and adaptive immunity, and acts as a sensor for proteolytic enzymes generated during infection. Generally is promoting inflammation. Can signal synergistically with TLR4 and probably TLR2 in inflammatory responses and modulates TLR3 signaling. Has a protective role in establishing the endothelial barrier; the activity involves coagulation factor X. Regulates endothelial cell barrier integrity during neutrophil extravasation, probably following proteolytic cleavage by PRTN3. Proposed to have a bronchoprotective role in airway epithelium, but also shown to compromise the airway epithelial barrier by interrupting E-cadherin adhesion. Involved in the regulation of vascular tone; activation results in hypotension presumably mediated by vasodilation. Associates with a subset of G proteins alpha subunits such as GNAQ, GNA11, GNA14, GNA12 and GNA13, but probably not with G(o)-alpha, G(i) subunit alpha-1 and G(i) subunit alpha-2. However, according to PubMed:21627585 can signal through G(i) subunit alpha. Believed to be a class B receptor which internalizes as a complex with arrestin and traffic with it to endosomal vesicles, presumably as desensitized receptor, for extended periods of time. Mediates inhibition of TNF-alpha stimulated JNK phosphorylation via coupling to GNAQ and GNA11; the function involves dissociation of RIPK1 and TRADD from TNFR1. Mediates phosphorylation of nuclear factor NF-kappa-B RELA subunit at 'Ser-536'; the function involves IKBKB and is predominantly independent of G proteins. Involved in cellular migration. Involved in cytoskeletal rearrangement and chemotaxis through beta-arrestin-promoted scaffolds; the function is independent of GNAQ and GNA11 and involves promotion of cofilin dephosphorylation and actin filament severing. Induces redistribution of COPS5 from the plasma membrane to the cytosol and activation of the JNK cascade is mediated by COPS5. Involved in the recruitment of leukocytes to the sites of inflammation and is the major PAR receptor capable of modulating eosinophil function such as pro-inflammatory cytokine secretion, superoxide production and degranulation. During inflammation promotes dendritic cell maturation, trafficking to the lymph nodes and subsequent T-cell activation. Involved in antimicrobial response of innate immune cells; activation enhances phagocytosis of Gram-positive and killing of Gram-negative bacteria. Acts synergistically with interferon-gamma in enhancing antiviral responses. Implicated in a number of acute and chronic inflammatory diseases such as of the joints, lungs, brain, gastrointestinal tract, periodontium, skin, and vascular systems, and in autoimmune disorders. Probably mediates activation of pro-inflammatory and pro-fibrotic responses in fibroblasts, triggered by coagulation factor Xa (F10). Mediates activation of barrier protective signaling responses in endothelial cells, triggered by coagulation factor Xa (F10). The protein is Proteinase-activated receptor 2 (F2RL1) of Homo sapiens (Human).